The following is a 295-amino-acid chain: Farnesyl diphosphate synthase (295 aa).

Residues Lys-46, Arg-49, and His-78 each coordinate isopentenyl diphosphate. Positions 85 and 91 each coordinate Mg(2+). A (2E)-geranyl diphosphate-binding site is contributed by Arg-96. Residue Arg-97 coordinates isopentenyl diphosphate. Positions 180, 181, 220, and 237 each coordinate (2E)-geranyl diphosphate.

The protein belongs to the FPP/GGPP synthase family. Mg(2+) serves as cofactor.

The protein resides in the cytoplasm. It catalyses the reaction isopentenyl diphosphate + (2E)-geranyl diphosphate = (2E,6E)-farnesyl diphosphate + diphosphate. The polypeptide is Farnesyl diphosphate synthase (ispA) (Haemophilus influenzae (strain ATCC 51907 / DSM 11121 / KW20 / Rd)).